Reading from the N-terminus, the 334-residue chain is Protein-methionine-sulfoxide reductase catalytic subunit MsrP (334 aa).

A signal peptide (tat-type signal) is located at residues 1-44 (MKKIRPLTEADVTAESAFFMQRRQVLKALGISAAALSLPSTAQA). Residues Asn88, 91-92 (YE), Cys146, Thr181, Asn233, Arg238, and 249-251 (GIK) each bind Mo-molybdopterin.

The protein belongs to the MsrP family. In terms of assembly, heterodimer of a catalytic subunit (MsrP) and a heme-binding subunit (MsrQ). The cofactor is Mo-molybdopterin. Predicted to be exported by the Tat system. The position of the signal peptide cleavage has not been experimentally proven.

The protein localises to the periplasm. The enzyme catalyses L-methionyl-[protein] + a quinone + H2O = L-methionyl-(S)-S-oxide-[protein] + a quinol. It carries out the reaction L-methionyl-[protein] + a quinone + H2O = L-methionyl-(R)-S-oxide-[protein] + a quinol. Its function is as follows. Part of the MsrPQ system that repairs oxidized periplasmic proteins containing methionine sulfoxide residues (Met-O), using respiratory chain electrons. Thus protects these proteins from oxidative-stress damage caused by reactive species of oxygen and chlorine generated by the host defense mechanisms. MsrPQ is essential for the maintenance of envelope integrity under bleach stress, rescuing a wide series of structurally unrelated periplasmic proteins from methionine oxidation, including the primary periplasmic chaperone SurA and the lipoprotein Pal. The catalytic subunit MsrP is non-stereospecific, being able to reduce both (R-) and (S-) diastereoisomers of methionine sulfoxide. This Salmonella arizonae (strain ATCC BAA-731 / CDC346-86 / RSK2980) protein is Protein-methionine-sulfoxide reductase catalytic subunit MsrP.